The chain runs to 221 residues: Lectin L6 (221 aa).

Repeat copies occupy residues 1–38, 39–75, 76–113, 114–150, 151–188, and 189–221. The interval 1–221 is 6 X approximate tandem repeats; that stretch reads VQWHQIPGKL…NSVDNIYRSG (221 aa). Cys32 and Cys36 are joined by a disulfide. A disulfide bridge connects residues Cys108 and Cys112. Cys183 and Cys187 are disulfide-bonded.

Belongs to the tectonin family. As to expression, hemocytes.

Its subcellular location is the cytoplasmic vesicle. It localises to the secretory vesicle. In terms of biological role, lipopolysaccharide-binding protein with Gram-negative antibacterial activity. Binds zinc and calcium. The polypeptide is Lectin L6 (Tachypleus tridentatus (Japanese horseshoe crab)).